The following is a 313-amino-acid chain: MTNVSGVDFQLRSVPLLSRVGADRADRLRTDMEAAAAGWPGAALLRVDSRNRVLVANGRVLLGAAIELADKPPPEAVFLGRVEGGRHVWAVRAALQPIADPDIPAEAVDLRGLGRIMDDTSSQLVSSASALLNWHDNARFSALDGAPTKPARAGWSRVNPITGHEEFPRIDPAVICLVHDGADRAVLARQAAWPERMFSLLAGFVEAGESFEVCVAREIREEIGLTVRDVRYLGSQQWPFPRSLMVGFHALGDPDEEFSFSDGEIAEAAWFTRDEVRAALAAGDWSSASESKLLLPGSISIARVIIESWAACE.

Residue arginine 111 participates in substrate binding. Residues 168-293 (PRIDPAVICL…DWSSASESKL (126 aa)) enclose the Nudix hydrolase domain. Alanine 202, glutamate 218, and glutamate 222 together coordinate a divalent metal cation. A Nudix box motif is present at residues 203-224 (GFVEAGESFEVCVAREIREEIG). 236–243 (QQWPFPRS) is a binding site for substrate. An a divalent metal cation-binding site is contributed by glutamate 264.

It belongs to the Nudix hydrolase family. NudC subfamily. As to quaternary structure, homodimer. It depends on Mg(2+) as a cofactor. The cofactor is Mn(2+).

It carries out the reaction a 5'-end NAD(+)-phospho-ribonucleoside in mRNA + H2O = a 5'-end phospho-adenosine-phospho-ribonucleoside in mRNA + beta-nicotinamide D-ribonucleotide + 2 H(+). The enzyme catalyses NAD(+) + H2O = beta-nicotinamide D-ribonucleotide + AMP + 2 H(+). It catalyses the reaction NADH + H2O = reduced beta-nicotinamide D-ribonucleotide + AMP + 2 H(+). In terms of biological role, mRNA decapping enzyme that specifically removes the nicotinamide adenine dinucleotide (NAD) cap from a subset of mRNAs by hydrolyzing the diphosphate linkage to produce nicotinamide mononucleotide (NMN) and 5' monophosphate mRNA. The NAD-cap is present at the 5'-end of some mRNAs and stabilizes RNA against 5'-processing. Has preference for mRNAs with a 5'-end purine. Catalyzes the hydrolysis of a broad range of dinucleotide pyrophosphates. The sequence is that of NAD-capped RNA hydrolase NudC from Mycobacterium tuberculosis (strain ATCC 25177 / H37Ra).